The sequence spans 376 residues: tRNA-specific 2-thiouridylase MnmA (376 aa).

Residues 9-16 and Met-35 contribute to the ATP site; that span reads AMSGGIDS. Cys-105 functions as the Nucleophile in the catalytic mechanism. A disulfide bridge links Cys-105 with Cys-202. Gly-129 is an ATP binding site. Positions 151-153 are interaction with tRNA; it reads KDQ. Cys-202 functions as the Cysteine persulfide intermediate in the catalytic mechanism. The interval 312–313 is interaction with tRNA; sequence RY.

The protein belongs to the MnmA/TRMU family.

Its subcellular location is the cytoplasm. It catalyses the reaction S-sulfanyl-L-cysteinyl-[protein] + uridine(34) in tRNA + AH2 + ATP = 2-thiouridine(34) in tRNA + L-cysteinyl-[protein] + A + AMP + diphosphate + H(+). Functionally, catalyzes the 2-thiolation of uridine at the wobble position (U34) of tRNA, leading to the formation of s(2)U34. This is tRNA-specific 2-thiouridylase MnmA from Amoebophilus asiaticus (strain 5a2).